The following is a 234-amino-acid chain: 7-cyano-7-deazaguanine synthase (234 aa).

8 to 18 (FSGGQDSTTCA) lines the ATP pocket. Positions 194, 202, 205, and 208 each coordinate Zn(2+).

The protein belongs to the QueC family. The cofactor is Zn(2+).

It carries out the reaction 7-carboxy-7-deazaguanine + NH4(+) + ATP = 7-cyano-7-deazaguanine + ADP + phosphate + H2O + H(+). The protein operates within purine metabolism; 7-cyano-7-deazaguanine biosynthesis. Functionally, catalyzes the ATP-dependent conversion of 7-carboxy-7-deazaguanine (CDG) to 7-cyano-7-deazaguanine (preQ(0)). In Gloeobacter violaceus (strain ATCC 29082 / PCC 7421), this protein is 7-cyano-7-deazaguanine synthase.